Reading from the N-terminus, the 338-residue chain is Glyceraldehyde-3-phosphate dehydrogenase (338 aa).

Residues 12 to 13, D34, and R79 each bind NAD(+); that span reads RI. Residues 150–152, T181, 210–211, and R233 contribute to the D-glyceraldehyde 3-phosphate site; these read SCT and TG. C151 acts as the Nucleophile in catalysis. Position 315 (N315) interacts with NAD(+).

Belongs to the glyceraldehyde-3-phosphate dehydrogenase family. In terms of assembly, homotetramer.

The protein resides in the cytoplasm. The catalysed reaction is D-glyceraldehyde 3-phosphate + phosphate + NAD(+) = (2R)-3-phospho-glyceroyl phosphate + NADH + H(+). The protein operates within carbohydrate degradation; glycolysis; pyruvate from D-glyceraldehyde 3-phosphate: step 1/5. The polypeptide is Glyceraldehyde-3-phosphate dehydrogenase (GPD) (Sordaria macrospora).